Consider the following 355-residue polypeptide: Hyaluronan and proteoglycan link protein 1 (355 aa).

Positions 1-9 (MTSLLFLVL) are excised as a propeptide. N-linked (GlcNAc...) asparagine glycans are attached at residues asparagine 21 and asparagine 56. In terms of domain architecture, Ig-like V-type spans 38–156 (PRLLVVAEQA…EDDTAVVALN (119 aa)). 5 disulfides stabilise this stretch: cysteine 61-cysteine 140, cysteine 182-cysteine 253, cysteine 206-cysteine 227, cysteine 280-cysteine 350, and cysteine 305-cysteine 326. Link domains follow at residues 160–255 (VVFP…FCFT) and 260–352 (GRFY…YCFR).

It belongs to the HAPLN family.

Its subcellular location is the secreted. The protein localises to the extracellular space. The protein resides in the extracellular matrix. In terms of biological role, stabilizes the aggregates of proteoglycan monomers with hyaluronic acid in the extracellular cartilage matrix. The sequence is that of Hyaluronan and proteoglycan link protein 1 (HAPLN1) from Gallus gallus (Chicken).